The following is a 435-amino-acid chain: MKYFKNIIFWNKLHPDEQKKILSRPILKENNFIKKTVKEIIENVRLFGNSALKKYTFLFDKQDINTFQVSKEKISSSSFYLSKVLKDSISVAQKNITCFHKAQIPSKIDVETEVGVRCEQIYLPLNSIGIYIPGGTAPLFSTVLMLAIPAKISGCKKIILCSPPPISNEVLYAAHICGIHDIYQVGGAQAIAALALGTETVPKVDKIFGPGNAYVTEAKLQVSSIFNGTEIDMLAGPSELLIIADNTANPDFIAADLLSQAEHGVSSQVILLTPCFELAEKVVLSINKQLNNLSRLSEILKTLKNSSVIIVKNLSECIEISNMYAPEHLIIQTQSPREVLNYISNASSIFLGLWSPESAGDYASGTNHVLPTYGKSITNSSLGLCDFQKRVLVQELTAKGLMKLSNTIEILSSAEKLQAHKNAVKIRVDFLKGKI.

Residues tyrosine 131, glutamine 189, and asparagine 212 each coordinate NAD(+). Substrate contacts are provided by serine 238, glutamine 260, and histidine 263. Residues glutamine 260 and histidine 263 each coordinate Zn(2+). Active-site proton acceptor residues include glutamate 327 and histidine 328. Histidine 328, aspartate 361, glutamate 415, and histidine 420 together coordinate substrate. Residue aspartate 361 participates in Zn(2+) binding. Residue histidine 420 coordinates Zn(2+).

It belongs to the histidinol dehydrogenase family. As to quaternary structure, homodimer. Zn(2+) serves as cofactor.

It carries out the reaction L-histidinol + 2 NAD(+) + H2O = L-histidine + 2 NADH + 3 H(+). Its pathway is amino-acid biosynthesis; L-histidine biosynthesis; L-histidine from 5-phospho-alpha-D-ribose 1-diphosphate: step 9/9. In terms of biological role, catalyzes the sequential NAD-dependent oxidations of L-histidinol to L-histidinaldehyde and then to L-histidine. This chain is Histidinol dehydrogenase (hisD), found in Buchnera aphidicola subsp. Acyrthosiphon pisum (strain APS) (Acyrthosiphon pisum symbiotic bacterium).